The sequence spans 417 residues: Methylthioribose-1-phosphate isomerase (417 aa).

Catalysis depends on Asp285, which acts as the Proton donor.

It belongs to the eIF-2B alpha/beta/delta subunits family. MtnA subfamily.

The protein localises to the cytoplasm. It localises to the nucleus. It carries out the reaction 5-(methylsulfanyl)-alpha-D-ribose 1-phosphate = 5-(methylsulfanyl)-D-ribulose 1-phosphate. The protein operates within amino-acid biosynthesis; L-methionine biosynthesis via salvage pathway; L-methionine from S-methyl-5-thio-alpha-D-ribose 1-phosphate: step 1/6. Its function is as follows. Catalyzes the interconversion of methylthioribose-1-phosphate (MTR-1-P) into methylthioribulose-1-phosphate (MTRu-1-P). The chain is Methylthioribose-1-phosphate isomerase from Lachancea thermotolerans (strain ATCC 56472 / CBS 6340 / NRRL Y-8284) (Yeast).